A 612-amino-acid chain; its full sequence is Cytokine-like nuclear factor N-PAC (612 aa).

Positions 22-81 (PKDLIWAKMKGFTPWPGMIVEPPLDLLTQQRRANTKCVFFFGSRNFAWIEENNIKPFEGP) constitute a PWWP domain. The segment at 168–270 (AVEGENNADS…GASSSSPTAR (103 aa)) is disordered. 2 stretches are compositionally biased toward low complexity: residues 177 to 193 (SSAS…TAKS) and 201 to 220 (AKPV…TTKS). Residues 228–240 (AHQTPTGANTSGL) are compositionally biased toward polar residues. An interaction with histone H3 region spans residues 276 to 279 (DDLL). Residues 319-612 (RDIVPSELTF…SSAVFVRSRF (294 aa)) form a dehydrogenase domain region. NAD(+) contacts are provided by residues 329 to 343 (GFLG…IVKD), threonine 421, and arginine 564.

This sequence belongs to the HIBADH-related family. NP60 subfamily. As to quaternary structure, binds to mononucleosomes. Interacts with male-specific lethal (MSL) histone acetyltransferase complex at least composed of mof, msl-1, msl-2 and msl-3.

The protein localises to the chromosome. In terms of biological role, nucleosome-destabilizing factor that is recruited to genes during transcriptional activation and colocalizes with a subset of trimethylated 'Lys-36' histone H3 (H3K36me3)-enriched regions. Binds DNA (in vitro). Facilitates Pol II transcription through nucleosomes. Facilitates male-specific lethal (MSL) histone acetyltransferase complex targeting to active genes on the X chromosome. Stimulates the acetylation of 'Lys-56' of nucleosomal histone H3 (H3K56ac) by nej. This chain is Cytokine-like nuclear factor N-PAC, found in Drosophila pseudoobscura pseudoobscura (Fruit fly).